Reading from the N-terminus, the 391-residue chain is Succinate--CoA ligase [ADP-forming] subunit beta (391 aa).

Residues 9 to 248 (KDILRKFGVS…TGEEDPFEVE (240 aa)) enclose the ATP-grasp domain. Residues lysine 50, 57-59 (GRG), glutamate 103, methionine 106, and glutamate 111 each bind ATP. Positions 203 and 217 each coordinate Mg(2+). Residues asparagine 268 and 325-327 (GIV) each bind substrate.

Belongs to the succinate/malate CoA ligase beta subunit family. As to quaternary structure, heterotetramer of two alpha and two beta subunits. Requires Mg(2+) as cofactor.

It carries out the reaction succinate + ATP + CoA = succinyl-CoA + ADP + phosphate. The catalysed reaction is GTP + succinate + CoA = succinyl-CoA + GDP + phosphate. Its pathway is carbohydrate metabolism; tricarboxylic acid cycle; succinate from succinyl-CoA (ligase route): step 1/1. Its function is as follows. Succinyl-CoA synthetase functions in the citric acid cycle (TCA), coupling the hydrolysis of succinyl-CoA to the synthesis of either ATP or GTP and thus represents the only step of substrate-level phosphorylation in the TCA. The beta subunit provides nucleotide specificity of the enzyme and binds the substrate succinate, while the binding sites for coenzyme A and phosphate are found in the alpha subunit. The protein is Succinate--CoA ligase [ADP-forming] subunit beta of Chlorobium phaeobacteroides (strain BS1).